Consider the following 400-residue polypeptide: Formate-dependent phosphoribosylglycinamide formyltransferase (400 aa).

N(1)-(5-phospho-beta-D-ribosyl)glycinamide contacts are provided by residues 22–23 and E82; that span reads EL. Residues R115, K156, 161–166, 196–199, and E204 contribute to the ATP site; these read SSGKGQ and EGFI. The ATP-grasp domain occupies 120–309; sequence RLAAETLGLP…EFALHARAIL (190 aa). Residues E268 and E280 each contribute to the Mg(2+) site. Residues D287, K361, and 368–369 each bind N(1)-(5-phospho-beta-D-ribosyl)glycinamide; that span reads RR.

The protein belongs to the PurK/PurT family. Homodimer.

It carries out the reaction N(1)-(5-phospho-beta-D-ribosyl)glycinamide + formate + ATP = N(2)-formyl-N(1)-(5-phospho-beta-D-ribosyl)glycinamide + ADP + phosphate + H(+). Its pathway is purine metabolism; IMP biosynthesis via de novo pathway; N(2)-formyl-N(1)-(5-phospho-D-ribosyl)glycinamide from N(1)-(5-phospho-D-ribosyl)glycinamide (formate route): step 1/1. Functionally, involved in the de novo purine biosynthesis. Catalyzes the transfer of formate to 5-phospho-ribosyl-glycinamide (GAR), producing 5-phospho-ribosyl-N-formylglycinamide (FGAR). Formate is provided by PurU via hydrolysis of 10-formyl-tetrahydrofolate. This Xanthomonas oryzae pv. oryzae (strain PXO99A) protein is Formate-dependent phosphoribosylglycinamide formyltransferase.